The sequence spans 220 residues: Dual specificity phosphatase 29 (220 aa).

The Tyrosine-protein phosphatase domain occupies 54–202; the sequence is HVNEVWPKLY…LRELDKQLVQ (149 aa). Residue 146–153 participates in substrate binding; sequence HCVMGRSR. C147 (phosphocysteine intermediate) is an active-site residue.

It belongs to the protein-tyrosine phosphatase family. Non-receptor class dual specificity subfamily. In terms of assembly, homodimer. Interacts with PRKAA2.

The protein localises to the cytoplasm. It localises to the nucleus. The enzyme catalyses O-phospho-L-tyrosyl-[protein] + H2O = L-tyrosyl-[protein] + phosphate. The catalysed reaction is O-phospho-L-seryl-[protein] + H2O = L-seryl-[protein] + phosphate. It carries out the reaction O-phospho-L-threonyl-[protein] + H2O = L-threonyl-[protein] + phosphate. Dual specificity phosphatase able to dephosphorylate phosphotyrosine, phosphoserine and phosphothreonine residues within the same substrate, with a preference for phosphotyrosine as a substrate. Involved in the modulation of intracellular signaling cascades. In skeletal muscle regulates systemic glucose homeostasis by activating, AMPK, an energy sensor protein kinase. Affects MAP kinase signaling though modulation of the ERK1/2 cascade in skeletal muscle promoting muscle cell differentiation, development and atrophy. The polypeptide is Dual specificity phosphatase 29 (DUSP29) (Pan troglodytes (Chimpanzee)).